The sequence spans 333 residues: Acetyl-coenzyme A carboxylase carboxyl transferase subunit alpha (333 aa).

One can recognise a CoA carboxyltransferase C-terminal domain in the interval 48 to 308; that stretch reads LLEQKVDALR…KEMLVEELRD (261 aa).

It belongs to the AccA family. In terms of assembly, acetyl-CoA carboxylase is a heterohexamer composed of biotin carboxyl carrier protein (AccB), biotin carboxylase (AccC) and two subunits each of ACCase subunit alpha (AccA) and ACCase subunit beta (AccD).

Its subcellular location is the cytoplasm. It carries out the reaction N(6)-carboxybiotinyl-L-lysyl-[protein] + acetyl-CoA = N(6)-biotinyl-L-lysyl-[protein] + malonyl-CoA. The protein operates within lipid metabolism; malonyl-CoA biosynthesis; malonyl-CoA from acetyl-CoA: step 1/1. Component of the acetyl coenzyme A carboxylase (ACC) complex. First, biotin carboxylase catalyzes the carboxylation of biotin on its carrier protein (BCCP) and then the CO(2) group is transferred by the carboxyltransferase to acetyl-CoA to form malonyl-CoA. The protein is Acetyl-coenzyme A carboxylase carboxyl transferase subunit alpha of Chlorobium limicola (strain DSM 245 / NBRC 103803 / 6330).